Consider the following 379-residue polypeptide: Ribosomal RNA large subunit methyltransferase G (379 aa).

It belongs to the methyltransferase superfamily. RlmG family.

Its subcellular location is the cytoplasm. It catalyses the reaction guanosine(1835) in 23S rRNA + S-adenosyl-L-methionine = N(2)-methylguanosine(1835) in 23S rRNA + S-adenosyl-L-homocysteine + H(+). Specifically methylates the guanine in position 1835 (m2G1835) of 23S rRNA. This chain is Ribosomal RNA large subunit methyltransferase G, found in Serratia proteamaculans (strain 568).